A 352-amino-acid chain; its full sequence is C-C chemokine receptor type 5 (352 aa).

At 1 to 30 (MDYQVSSPTYDIDYYTSEPCQKINVKQIAA) the chain is on the extracellular side. A Sulfotyrosine modification is found at Tyr-3. O-linked (GalNAc...) serine glycosylation is found at Ser-6 and Ser-7. Residues Tyr-10, Tyr-14, and Tyr-15 each carry the sulfotyrosine modification. Cystine bridges form between Cys-20–Cys-269 and Cys-101–Cys-178. A helical membrane pass occupies residues 31-58 (RLLPPLYSLVFIFGFVGNILVVLILINC). At 59-68 (KRLKSMTDIY) the chain is on the cytoplasmic side. A helical membrane pass occupies residues 69–89 (LLNLAISDLLFLLTVPFWAHY). Topologically, residues 90-102 (AAAQWDFGNTMCQ) are extracellular. Residues 103 to 124 (LLTGLYFIGFFSGIFFIILLTI) traverse the membrane as a helical segment. Residues 125 to 141 (DRYLAIVHAVFALKART) are Cytoplasmic-facing. A helical transmembrane segment spans residues 142–166 (VTFGVVTSVITWVVAVFASLPRIIF). The Extracellular segment spans residues 167-198 (TTSHRERLHYTCSSHFPYSQYQFWKNFHTLKI). Residues 199 to 218 (VILGLVLPLLVMVICYSGIL) form a helical membrane-spanning segment. Over 219–235 (KTLLRCRNEKKRHRAVR) the chain is Cytoplasmic. A helical transmembrane segment spans residues 236–260 (LIFTIMIVYFLFWAPYNIVLLLNTF). The Extracellular portion of the chain corresponds to 261 to 277 (QEFFGLNNCSSSNRLDQ). The chain crosses the membrane as a helical span at residues 278–301 (AMQVTETLGMTHCCINPIIYAFVG). Topologically, residues 302–352 (EKFRNYLLVFFQKHIAKRFCKCCSIFQQEAPERASSVYTRSTGEQEISVGL) are cytoplasmic. Residues Cys-321, Cys-323, and Cys-324 are each lipidated (S-palmitoyl cysteine). Ser-336, Ser-337, Ser-342, and Ser-349 each carry phosphoserine; by BARK1.

This sequence belongs to the G-protein coupled receptor 1 family. In terms of assembly, interacts with PRAF2. Efficient ligand binding to CCL3/MIP-1alpha and CCL4/MIP-1beta requires sulfation, O-glycosylation and sialic acid modifications. Glycosylation on Ser-6 is required for efficient binding of CCL4. Interacts with GRK2. Interacts with ARRB1 and ARRB2. Interacts with CNIH4. Interacts with S100A4; this interaction stimulates T-lymphocyte chemotaxis. In terms of processing, sulfated on at least 2 of the N-terminal tyrosines. Sulfation is required for efficient binding of the chemokines, CCL3 and CCL4. Post-translationally, palmitoylation in the C-terminal is important for cell surface expression. Phosphorylation on serine residues in the C-terminal is stimulated by binding CC chemokines especially by APO-RANTES. In terms of processing, O-glycosylated, but not N-glycosylated. Ser-6 appears to be the major site even if Ser-7 may be also O-glycosylated. Also sialylated glycans present which contribute to chemokine binding. Thr-16 and Ser-17 may also be glycosylated and, if so, with small moieties such as a T-antigen.

The protein resides in the cell membrane. Its function is as follows. Receptor for a number of inflammatory CC-chemokines including CCL3/MIP-1-alpha, CCL4/MIP-1-beta and RANTES and subsequently transduces a signal by increasing the intracellular calcium ion level. May play a role in the control of granulocytic lineage proliferation or differentiation. Participates in T-lymphocyte migration to the infection site by acting as a chemotactic receptor. The sequence is that of C-C chemokine receptor type 5 (CCR5) from Cercopithecus ascanius (Black-cheeked white-nosed monkey).